The chain runs to 237 residues: MVYSRPIFCLCGDILWLSLERRAFTILFYVDNSFVCSSGLCRKGGVNEHKRQLHNVFTLIPFVLLYFFYDVTTGAAMLSGVSSHILLDFMTPTGCPFFYPIYRGRYRVNWRHKGSGPREKRALTTIGILAAILLLVIYAPSPFAPTSAISQWKGSGSGVNNTSNNGTDINVNFNFRGNGDTWIHPYPNGSIFIDCVGDSNSRVYRYRASSRGGQGKYLKLDSNTTENKTTKQNETGG.

Residues 213–237 (GQGKYLKLDSNTTENKTTKQNETGG) form a disordered region. The span at 223 to 237 (NTTENKTTKQNETGG) shows a compositional bias: low complexity.

This is an uncharacterized protein from Methanothermobacter thermautotrophicus (Methanobacterium thermoformicicum).